The primary structure comprises 401 residues: ATP-dependent RNA helicase FAL1 (401 aa).

Residues 27–55 (PTFESMSLKENLLRGIYAYGYESPSAVQS) carry the Q motif motif. In terms of domain architecture, Helicase ATP-binding spans 58–228 (IVQVCKGRDT…TKFMTDPVRI (171 aa)). An ATP-binding site is contributed by 71–78 (AQSGTGKT). Residues 176–179 (DEAD) carry the DEAD box motif. The 162-residue stretch at 239 to 400 (GLKQYFIAVE…EMPMNVADLI (162 aa)) folds into the Helicase C-terminal domain.

The protein belongs to the DEAD box helicase family. DDX48/FAL1 subfamily.

It is found in the nucleus. Its subcellular location is the nucleolus. It catalyses the reaction ATP + H2O = ADP + phosphate + H(+). Its function is as follows. ATP-dependent RNA helicase involved in 40S ribosomal subunit biogenesis. Required for the processing and cleavage of 35S pre-rRNA at sites A0, A1, and A2, leading to mature 18S rRNA. The sequence is that of ATP-dependent RNA helicase FAL1 (FAL1) from Gibberella zeae (strain ATCC MYA-4620 / CBS 123657 / FGSC 9075 / NRRL 31084 / PH-1) (Wheat head blight fungus).